Consider the following 754-residue polypeptide: Probable beta-glucosidase D (754 aa).

Residues 1-20 (MKVLSFIVAAALLGLTGASS) form the signal peptide. N-linked (GlcNAc...) asparagine glycans are attached at residues asparagine 66, asparagine 69, and asparagine 186. Positions 186–206 (NRTGGGGGGGGDSGSAPYSSN) are disordered. Positions 188–198 (TGGGGGGGGDS) are enriched in gly residues. Asparagine 239 carries N-linked (GlcNAc...) asparagine glycosylation. Residue aspartate 267 is part of the active site. Asparagine 301, asparagine 345, asparagine 443, asparagine 512, asparagine 534, asparagine 573, asparagine 588, asparagine 655, and asparagine 745 each carry an N-linked (GlcNAc...) asparagine glycan.

This sequence belongs to the glycosyl hydrolase 3 family.

It is found in the secreted. The enzyme catalyses Hydrolysis of terminal, non-reducing beta-D-glucosyl residues with release of beta-D-glucose.. It participates in glycan metabolism; cellulose degradation. Functionally, beta-glucosidases are one of a number of cellulolytic enzymes involved in the degradation of cellulosic biomass. Catalyzes the last step releasing glucose from the inhibitory cellobiose. This chain is Probable beta-glucosidase D (bglD), found in Aspergillus niger (strain ATCC MYA-4892 / CBS 513.88 / FGSC A1513).